Reading from the N-terminus, the 135-residue chain is uncharacterized protein (135 aa).

Residues 8–123 (PKGIIVLKTL…IFIYVAINKT (116 aa)) enclose the HotDog ACOT-type domain.

This sequence belongs to the acyl coenzyme A hydrolase family.

This is an uncharacterized protein from Buchnera aphidicola subsp. Acyrthosiphon pisum (strain APS) (Acyrthosiphon pisum symbiotic bacterium).